The chain runs to 42 residues: Alpha-conotoxin VnIB (42 aa).

A propeptide spanning residues 1-22 (ASDGRNAAADDKASDPIALTVR) is cleaved from the precursor. 2 disulfide bridges follow: C25–C31 and C26–C38. G39 is subject to Glycine amide.

It belongs to the conotoxin A superfamily. Expressed by the venom duct.

It is found in the secreted. Alpha-conotoxins act on postsynaptic membranes, they bind to the nicotinic acetylcholine receptors (nAChR) and thus inhibit them. This toxin potently and selectively inhibits human and rat alpha-6-beta-4/CHRNA6-CHRNB4 nAChR (IC(50)=12 nM on rat nAChR). It exhibits rapid binding and unbinding at this receptor. It also shows activity on rat alpha-6-beta-4/CHRNA6-CHRNB4 (IC(50)=12 nM), human alpha-6/alpha-3-beta-4 (CHRNA6/CHRNA3-CHRNB4) (IC(50)=5.3 nM), rat alpha-6/alpha-3-beta-4 (CHRNA6/CHRNA3-CHRNB4) (IC(50)=18 nM), rat alpha-3-beta-4/CHRNA3-CHRNB4 (IC(50)=320 nM), and rat alpha-6/alpha-3-beta-2-beta-3 (CHRNA6/CHRNA3-CHRNB2-CHRNB3) (IC(50)=4 uM). In Conus ventricosus (Mediterranean cone), this protein is Alpha-conotoxin VnIB.